We begin with the raw amino-acid sequence, 272 residues long: ATP synthase subunit delta (272 aa).

The protein belongs to the ATPase delta chain family. In terms of assembly, F-type ATPases have 2 components, F(1) - the catalytic core - and F(0) - the membrane proton channel. F(1) has five subunits: alpha(3), beta(3), gamma(1), delta(1), epsilon(1). F(0) has three main subunits: a(1), b(2) and c(10-14). The alpha and beta chains form an alternating ring which encloses part of the gamma chain. F(1) is attached to F(0) by a central stalk formed by the gamma and epsilon chains, while a peripheral stalk is formed by the delta and b chains.

Its subcellular location is the cell membrane. F(1)F(0) ATP synthase produces ATP from ADP in the presence of a proton or sodium gradient. F-type ATPases consist of two structural domains, F(1) containing the extramembraneous catalytic core and F(0) containing the membrane proton channel, linked together by a central stalk and a peripheral stalk. During catalysis, ATP synthesis in the catalytic domain of F(1) is coupled via a rotary mechanism of the central stalk subunits to proton translocation. Functionally, this protein is part of the stalk that links CF(0) to CF(1). It either transmits conformational changes from CF(0) to CF(1) or is implicated in proton conduction. The polypeptide is ATP synthase subunit delta (Corynebacterium urealyticum (strain ATCC 43042 / DSM 7109)).